The chain runs to 209 residues: Large ribosomal subunit protein uL4 (209 aa).

Residues 46–72 form a disordered region; the sequence is GTSSTKTRSEVRGSSKKPWKQKGTGRA. Residues 59-72 show a composition bias toward basic residues; sequence SSKKPWKQKGTGRA.

Belongs to the universal ribosomal protein uL4 family. In terms of assembly, part of the 50S ribosomal subunit.

Functionally, one of the primary rRNA binding proteins, this protein initially binds near the 5'-end of the 23S rRNA. It is important during the early stages of 50S assembly. It makes multiple contacts with different domains of the 23S rRNA in the assembled 50S subunit and ribosome. Forms part of the polypeptide exit tunnel. This chain is Large ribosomal subunit protein uL4, found in Borreliella burgdorferi (strain ATCC 35210 / DSM 4680 / CIP 102532 / B31) (Borrelia burgdorferi).